A 132-amino-acid polypeptide reads, in one-letter code: Small ribosomal subunit protein uS8 (132 aa).

This sequence belongs to the universal ribosomal protein uS8 family. Part of the 30S ribosomal subunit. Contacts proteins S5 and S12.

In terms of biological role, one of the primary rRNA binding proteins, it binds directly to 16S rRNA central domain where it helps coordinate assembly of the platform of the 30S subunit. This is Small ribosomal subunit protein uS8 from Geobacillus sp. (strain WCH70).